The primary structure comprises 183 residues: Negative modulator of initiation of replication (183 aa).

The segment at R118 to Y122 is interaction with DNA.

It belongs to the SeqA family. Homodimer. Polymerizes to form helical filaments.

It localises to the cytoplasm. Functionally, negative regulator of replication initiation, which contributes to regulation of DNA replication and ensures that replication initiation occurs exactly once per chromosome per cell cycle. Binds to pairs of hemimethylated GATC sequences in the oriC region, thus preventing assembly of replication proteins and re-initiation at newly replicated origins. Repression is relieved when the region becomes fully methylated. The protein is Negative modulator of initiation of replication of Proteus mirabilis (strain HI4320).